The primary structure comprises 349 residues: DNA polymerase IV (349 aa).

Residues 7 to 188 form the UmuC domain; that stretch reads IIHIDMDYFF…LPVKKLFGVG (182 aa). Mg(2+) contacts are provided by Asp-11 and Asp-106. The active site involves Glu-107.

It belongs to the DNA polymerase type-Y family. In terms of assembly, monomer. Mg(2+) serves as cofactor.

Its subcellular location is the cytoplasm. The enzyme catalyses DNA(n) + a 2'-deoxyribonucleoside 5'-triphosphate = DNA(n+1) + diphosphate. Its function is as follows. Poorly processive, error-prone DNA polymerase involved in untargeted mutagenesis. Copies undamaged DNA at stalled replication forks, which arise in vivo from mismatched or misaligned primer ends. These misaligned primers can be extended by PolIV. Exhibits no 3'-5' exonuclease (proofreading) activity. May be involved in translesional synthesis, in conjunction with the beta clamp from PolIII. The polypeptide is DNA polymerase IV (Francisella tularensis subsp. novicida (strain U112)).